Here is a 290-residue protein sequence, read N- to C-terminus: Probable ECF RNA polymerase sigma factor SigI (290 aa).

The sigma-70 factor domain-2 stretch occupies residues 11-74 (WRAHRAYLVD…LCLDHIKSAS (64 aa)). The Polymerase core binding motif lies at 34-37 (DMVQ). The segment at 110–162 (LALLIMLERLGPAERVVFVLHEIFGLPYQQIATTIGSQASTCRQLAHRARRKI) is sigma-70 factor domain-4_2. The segment at residues 137-156 (YQQIATTIGSQASTCRQLAH) is a DNA-binding region (H-T-H motif).

This sequence belongs to the sigma-70 factor family. ECF subfamily. In terms of assembly, interacts transiently with the RNA polymerase catalytic core formed by RpoA, RpoB, RpoC and RpoZ (2 alpha, 1 beta, 1 beta' and 1 omega subunit) to form the RNA polymerase holoenzyme that can initiate transcription.

Sigma factors are initiation factors that promote the attachment of RNA polymerase to specific initiation sites and are then released. Extracytoplasmic function (ECF) sigma factors are held in an inactive form by a cognate anti-sigma factor until released, although no anti-sigma factor is known for this protein. The protein is Probable ECF RNA polymerase sigma factor SigI (sigI) of Mycobacterium tuberculosis (strain CDC 1551 / Oshkosh).